The primary structure comprises 647 residues: Protein FAM161A (647 aa).

2 disordered regions span residues 32-55 and 143-175; these read RELG…TSME and PAQH…GDSE. The span at 152–161 shows a compositional bias: polar residues; it reads SRSVSPSLAE. 2 coiled-coil regions span residues 243–268 and 518–544; these read IKSK…ECQK and AIRK…VLNK. Disordered regions lie at residues 504-524 and 588-647; these read QTPR…KREK and DEHV…IEEI. Basic and acidic residues-rich tracts occupy residues 510–524 and 588–600; these read ESSK…KREK and DEHV…KKIP. Residues 613-638 show a composition bias toward acidic residues; it reads DLLDDEEDDKYDCESEEAEEEDAYST.

Belongs to the FAM161 family.

It is found in the cytoplasm. The protein localises to the cytoskeleton. The protein resides in the cilium basal body. Its subcellular location is the cell projection. It localises to the cilium. It is found in the microtubule organizing center. The protein localises to the centrosome. The protein resides in the centriole. Its function is as follows. Involved in ciliogenesis. This Xenopus laevis (African clawed frog) protein is Protein FAM161A (fam161a).